A 442-amino-acid chain; its full sequence is Methionine aminopeptidase 2-1 (442 aa).

The interval 1 to 92 (MAAQASEELE…ISELFPNNQY (92 aa)) is disordered. A compositionally biased stretch (polar residues) spans 15-25 (NGQNGHAQEQV). Positions 30 to 47 (EAADNDDSEDDEKEEEGG) are enriched in acidic residues. The span at 56–72 (AKKKKKRKPKKKKKGGA) shows a compositional bias: basic residues. H195 contributes to the substrate binding site. Positions 215, 226, and 295 each coordinate a divalent metal cation. A substrate-binding site is contributed by H303. Positions 328 and 423 each coordinate a divalent metal cation.

This sequence belongs to the peptidase M24A family. Methionine aminopeptidase eukaryotic type 2 subfamily. It depends on Co(2+) as a cofactor. The cofactor is Zn(2+). Mn(2+) is required as a cofactor. Requires Fe(2+) as cofactor.

It is found in the cytoplasm. It carries out the reaction Release of N-terminal amino acids, preferentially methionine, from peptides and arylamides.. In terms of biological role, cotranslationally removes the N-terminal methionine from nascent proteins. The N-terminal methionine is often cleaved when the second residue in the primary sequence is small and uncharged (Met-Ala-, Cys, Gly, Pro, Ser, Thr, or Val). The sequence is that of Methionine aminopeptidase 2-1 from Talaromyces marneffei (strain ATCC 18224 / CBS 334.59 / QM 7333) (Penicillium marneffei).